The chain runs to 135 residues: Small ribosomal subunit protein bS18 (135 aa).

The disordered stretch occupies residues 1–65; that stretch reads MARPDMGGPK…GDEGGGRRGF (65 aa). Gly residues predominate over residues 9–41; the sequence is PKMGGGFGGPRSGGFGGGGGGGGFGGGGFGGGR. The span at 42 to 61 shows a compositional bias: basic and acidic residues; that stretch reads GGDRGDRGDRDDRGGDEGGG.

It belongs to the bacterial ribosomal protein bS18 family. As to quaternary structure, part of the 30S ribosomal subunit. Forms a tight heterodimer with protein bS6.

In terms of biological role, binds as a heterodimer with protein bS6 to the central domain of the 16S rRNA, where it helps stabilize the platform of the 30S subunit. The chain is Small ribosomal subunit protein bS18 from Anaeromyxobacter dehalogenans (strain 2CP-C).